A 316-amino-acid chain; its full sequence is tRNA dimethylallyltransferase (316 aa).

15–22 (GPTASGKS) contributes to the ATP binding site. 17 to 22 (TASGKS) contacts substrate. The interaction with substrate tRNA stretch occupies residues 40 to 43 (DSRQ).

This sequence belongs to the IPP transferase family. As to quaternary structure, monomer. Mg(2+) is required as a cofactor.

The enzyme catalyses adenosine(37) in tRNA + dimethylallyl diphosphate = N(6)-dimethylallyladenosine(37) in tRNA + diphosphate. In terms of biological role, catalyzes the transfer of a dimethylallyl group onto the adenine at position 37 in tRNAs that read codons beginning with uridine, leading to the formation of N6-(dimethylallyl)adenosine (i(6)A). In Chlorobium limicola (strain DSM 245 / NBRC 103803 / 6330), this protein is tRNA dimethylallyltransferase.